The primary structure comprises 326 residues: MIKKIAILTSGGDSPGMNNAIRAIIKTARLYDIETYLVYEGFLGLYNGWIKPSEGIDEDSYINKGGTFIFSARFVEFAQEKYRQVAKENLLKLGIEALVVIGGDGSYKGAQKLHEMGIKTIALPGTIDNDITSSDFTIGYDTALNTIVEAVDKIRDTASSHKRCIMVEVMGHGASDLALYSGMATGSEIIVSNDYKLSVEEMAKIVKKQFEKPNKRSVIITVSEFVFKDLQQVAKQIEELTNITTKAVVLAHIQRGGYPSARERINATILGKHAVLRLKQGQSGIALGLIKNQVAATPILEALAMPQTRKDLLERRTKSYNDINQA.

Gly-12 contacts ATP. Position 22–26 (22–26 (RAIIK)) interacts with ADP. ATP-binding positions include 73-74 (RF) and 103-106 (GDGS). Position 104 (Asp-104) interacts with Mg(2+). 126–128 (TID) is a substrate binding site. The active-site Proton acceptor is the Asp-128. ADP is bound at residue Arg-155. Residues Arg-163 and 170–172 (MGH) contribute to the substrate site. ADP is bound by residues 186-188 (GSE), Lys-212, and 215-217 (KRS). Residues Glu-224, Lys-246, and 252–255 (HIQR) each bind substrate.

The protein belongs to the phosphofructokinase type A (PFKA) family. ATP-dependent PFK group I subfamily. Prokaryotic clade 'B1' sub-subfamily. As to quaternary structure, homotetramer. Mg(2+) serves as cofactor.

It is found in the cytoplasm. The enzyme catalyses beta-D-fructose 6-phosphate + ATP = beta-D-fructose 1,6-bisphosphate + ADP + H(+). It functions in the pathway carbohydrate degradation; glycolysis; D-glyceraldehyde 3-phosphate and glycerone phosphate from D-glucose: step 3/4. Its activity is regulated as follows. Allosterically activated by ADP and other diphosphonucleosides, and allosterically inhibited by phosphoenolpyruvate. Functionally, catalyzes the phosphorylation of D-fructose 6-phosphate to fructose 1,6-bisphosphate by ATP, the first committing step of glycolysis. In Mycoplasmopsis pulmonis (strain UAB CTIP) (Mycoplasma pulmonis), this protein is ATP-dependent 6-phosphofructokinase.